Reading from the N-terminus, the 88-residue chain is Alpha-latrotoxin associated low molecular weight protein 2 (88 aa).

Positions 1–19 (MLKLICIAFLVTVLTLVAG) are cleaved as a signal peptide. Cystine bridges form between cysteine 30–cysteine 66, cysteine 46–cysteine 62, and cysteine 49–cysteine 75.

This sequence belongs to the arthropod CHH/MIH/GIH/VIH hormone family. Expressed by the venom gland.

It is found in the secreted. Its function is as follows. May increase the toxicity of alpha-latrotoxin and/or other venom components. Is non-toxic to mice and to the cockroach Periplaneta americana. This is Alpha-latrotoxin associated low molecular weight protein 2 from Latrodectus hesperus (Western black widow spider).